A 338-amino-acid chain; its full sequence is Bacteriochlorophyllide d C-20 methyltransferase (338 aa).

Glu147 is an S-adenosyl-L-methionine binding site. His150 is a binding site for substrate. Residues Gly177, Asn200, 227-228 (DI), and 242-243 (CR) each bind S-adenosyl-L-methionine. The active-site Nucleophile is Tyr246. A bacteriochlorophyll d is bound at residue His290.

The protein belongs to the class I-like SAM-binding methyltransferase superfamily. Cation-independent O-methyltransferase family. In terms of assembly, homodimer.

The enzyme catalyses a bacteriochlorophyllide d + S-adenosyl-L-methionine = a bacteriochlorophyllide c + S-adenosyl-L-homocysteine + H(+). It functions in the pathway porphyrin-containing compound metabolism; bacteriochlorophyll biosynthesis (light-independent). Involved in the biosynthesis of the major light-harvesting pigment bacteriochlorophyll c (BChlc), which confers a significant competitive advantage to green sulfur bacteria living at limiting red and near-infrared light intensities. Catalyzes the methylation at the C-20 position of the cyclic tetrapyrrole chlorin of bacteriochlorophyll d (BChld) to produce bacteriochlorophyll c (BChlc) using S-adenosylmethionine (SAM) as a methyl source. The sequence is that of Bacteriochlorophyllide d C-20 methyltransferase from Chlorobaculum tepidum (strain ATCC 49652 / DSM 12025 / NBRC 103806 / TLS) (Chlorobium tepidum).